Reading from the N-terminus, the 415-residue chain is Gamma-glutamyl phosphate reductase (415 aa).

It belongs to the gamma-glutamyl phosphate reductase family.

The protein localises to the cytoplasm. It catalyses the reaction L-glutamate 5-semialdehyde + phosphate + NADP(+) = L-glutamyl 5-phosphate + NADPH + H(+). The protein operates within amino-acid biosynthesis; L-proline biosynthesis; L-glutamate 5-semialdehyde from L-glutamate: step 2/2. In terms of biological role, catalyzes the NADPH-dependent reduction of L-glutamate 5-phosphate into L-glutamate 5-semialdehyde and phosphate. The product spontaneously undergoes cyclization to form 1-pyrroline-5-carboxylate. This Dictyoglomus turgidum (strain DSM 6724 / Z-1310) protein is Gamma-glutamyl phosphate reductase.